The sequence spans 506 residues: RNA-splicing ligase RtcB homolog (506 aa).

Aspartate 120, cysteine 123, histidine 228, histidine 260, and histidine 354 together coordinate Mn(2+). 227–231 (NHYAE) contributes to the GMP binding site. Residues 354–355 (HN), 403–406 (GGTM), serine 410, 429–432 (HGAG), and lysine 505 contribute to the GMP site. The active-site GMP-histidine intermediate is histidine 429.

Belongs to the RtcB family. Catalytic component of the tRNA-splicing ligase complex. Mn(2+) serves as cofactor.

The enzyme catalyses a 3'-end 3'-phospho-ribonucleotide-RNA + a 5'-end dephospho-ribonucleoside-RNA + GTP = a ribonucleotidyl-ribonucleotide-RNA + GMP + diphosphate. The catalysed reaction is a 3'-end 2',3'-cyclophospho-ribonucleotide-RNA + a 5'-end dephospho-ribonucleoside-RNA + GTP + H2O = a ribonucleotidyl-ribonucleotide-RNA + GMP + diphosphate + H(+). Functionally, catalytic subunit of the tRNA-splicing ligase complex that acts by directly joining spliced tRNA halves to mature-sized tRNAs by incorporating the precursor-derived splice junction phosphate into the mature tRNA as a canonical 3',5'-phosphodiester. May act as an RNA ligase with broad substrate specificity, and may function toward other RNAs. This chain is RNA-splicing ligase RtcB homolog, found in Plasmodium falciparum (isolate 3D7).